Consider the following 180-residue polypeptide: Outer-membrane lipoprotein LolB (180 aa).

Positions 1 to 16 (MIRRVLLLSLALLLAG) are cleaved as a signal peptide. The N-palmitoyl cysteine moiety is linked to residue C17. The S-diacylglycerol cysteine moiety is linked to residue C17.

It belongs to the LolB family. In terms of assembly, monomer.

It is found in the cell outer membrane. In terms of biological role, plays a critical role in the incorporation of lipoproteins in the outer membrane after they are released by the LolA protein. The sequence is that of Outer-membrane lipoprotein LolB from Chromobacterium violaceum (strain ATCC 12472 / DSM 30191 / JCM 1249 / CCUG 213 / NBRC 12614 / NCIMB 9131 / NCTC 9757 / MK).